A 483-amino-acid chain; its full sequence is Inositol-pentakisphosphate 2-kinase (483 aa).

The EXKPK motif motif lies at 140 to 144 (EIKPK). The segment at 279–298 (SNRSGEPRKMHLSESKPHCE) is disordered. Residues 281–297 (RSGEPRKMHLSESKPHC) show a composition bias toward basic and acidic residues.

Belongs to the IPK1 type 2 family. In terms of tissue distribution, expressed both maternally and zygotically. Expressed in cleavage-stage embryos. Ubiquitously distributed throughout blastula stages of embryogenesis. At the onset of gastrulation, it is enriched in cells around the blastoderm margin. At shield stage, expression is detected in the deep involuted cells that contribute to mesendoderm. During mid and late gastrula stages, it is strongly expressed in axial mesendoderm. However, it is not present in the nascent tailbud at yolk plug closure (YPC) stage. Expression in axial mesendoderm is reduced at the 2 somite stage (SS). At 6 SS, it is expressed in cells surrounding Kupffer's vesicle, but apparently not within. By 10 SS, it is no longer detected as a specific signal above background.

The protein resides in the cytoplasm. It is found in the nucleus. The catalysed reaction is 1D-myo-inositol 1,3,4,5,6-pentakisphosphate + ATP = 1D-myo-inositol hexakisphosphate + ADP + H(+). Its function is as follows. Phosphorylates Ins(1,3,4,5,6)P5 at position 2 to form Ins(1,2,3,4,5,6)P6 (InsP6 or phytate). InsP6 is involved in many processes such as mRNA export, non-homologous end-joining, endocytosis and ion channel regulation. InsP6 also acts as a key regulator of left-right asymmetry in embryo, probably by regulating asymmetric Ca(2+) during left-right specification. The polypeptide is Inositol-pentakisphosphate 2-kinase (ippk) (Danio rerio (Zebrafish)).